A 406-amino-acid polypeptide reads, in one-letter code: COP9 signalosome complex subunit 4 (406 aa).

One can recognise a PCI domain in the interval 197 to 366; that stretch reads YRRKFIEAAQ…GIVHFETREP (170 aa).

The protein belongs to the CSN4 family. Component of the CSN complex, probably composed of cops1, cops2, cops3, cops4, cops5, cops6, cops7, cops8 and cops9.

It is found in the cytoplasm. The protein resides in the nucleus. It localises to the cytoplasmic vesicle. The protein localises to the secretory vesicle. Its subcellular location is the synaptic vesicle. Component of the COP9 signalosome complex (CSN), a complex involved in various cellular and developmental processes. The CSN complex is an essential regulator of the ubiquitin (Ubl) conjugation pathway by mediating the deneddylation of the cullin subunits of E3 ligase complexes, leading to modify the Ubl ligase activity. The sequence is that of COP9 signalosome complex subunit 4 (cops4) from Danio rerio (Zebrafish).